Reading from the N-terminus, the 138-residue chain is Augmin complex subunit msd1 (138 aa).

Component of the augmin complex composed of dgt2, dgt3, dgt4, dgt5, dgt6, msd1, msd5 and wac. The complex interacts directly or indirectly with microtubules and is required for centrosome-independent generation of spindle microtubules.

The protein localises to the cytoplasm. The protein resides in the cytoskeleton. It localises to the spindle. In terms of biological role, as part of the augmin complex, plays a role in centrosome-independent generation of spindle microtubules. The complex is required for mitotic spindle assembly through its involvement in localizing gamma-tubulin to spindle microtubules. msd1 is required for microtubule nucleation from within the mitotic spindle and for localization of Grip71 to centrosomes and mitotic spindle. The polypeptide is Augmin complex subunit msd1 (Drosophila melanogaster (Fruit fly)).